The following is a 317-amino-acid chain: Transaldolase (317 aa).

The Schiff-base intermediate with substrate role is filled by K132.

The protein belongs to the transaldolase family. Type 1 subfamily. As to quaternary structure, homodimer.

Its subcellular location is the cytoplasm. It carries out the reaction D-sedoheptulose 7-phosphate + D-glyceraldehyde 3-phosphate = D-erythrose 4-phosphate + beta-D-fructose 6-phosphate. It functions in the pathway carbohydrate degradation; pentose phosphate pathway; D-glyceraldehyde 3-phosphate and beta-D-fructose 6-phosphate from D-ribose 5-phosphate and D-xylulose 5-phosphate (non-oxidative stage): step 2/3. Transaldolase is important for the balance of metabolites in the pentose-phosphate pathway. The protein is Transaldolase of Shewanella frigidimarina (strain NCIMB 400).